A 255-amino-acid polypeptide reads, in one-letter code: Coiled-coil domain-containing 92B (255 aa).

Residues 28-90 (LRDLHLEILR…AAANAELRRE (63 aa)) are a coiled coil. Residues 149–255 (QRLQAPRPGP…SQPSAPGDPE (107 aa)) are disordered. Residues 166–177 (PRRRALRARRPP) are compositionally biased toward basic residues. Residues 242-255 (QPAPSQPSAPGDPE) are compositionally biased toward pro residues.

In Homo sapiens (Human), this protein is Coiled-coil domain-containing 92B.